Here is a 142-residue protein sequence, read N- to C-terminus: Large ribosomal subunit protein uL11 (142 aa).

This sequence belongs to the universal ribosomal protein uL11 family. In terms of assembly, part of the ribosomal stalk of the 50S ribosomal subunit. Interacts with L10 and the large rRNA to form the base of the stalk. L10 forms an elongated spine to which L12 dimers bind in a sequential fashion forming a multimeric L10(L12)X complex. In terms of processing, one or more lysine residues are methylated.

In terms of biological role, forms part of the ribosomal stalk which helps the ribosome interact with GTP-bound translation factors. The protein is Large ribosomal subunit protein uL11 of Xanthomonas axonopodis pv. citri (strain 306).